The chain runs to 276 residues: Pantothenate synthetase (276 aa).

Residue 26–33 (MGFLHEGH) coordinates ATP. Residue H33 is the Proton donor of the active site. (R)-pantoate is bound at residue Q57. Q57 contacts beta-alanine. Residue 142 to 145 (GLKD) participates in ATP binding. Q148 is a (R)-pantoate binding site. ATP contacts are provided by residues I171 and 179–182 (KSSR).

Belongs to the pantothenate synthetase family. In terms of assembly, homodimer.

It is found in the cytoplasm. The catalysed reaction is (R)-pantoate + beta-alanine + ATP = (R)-pantothenate + AMP + diphosphate + H(+). It functions in the pathway cofactor biosynthesis; (R)-pantothenate biosynthesis; (R)-pantothenate from (R)-pantoate and beta-alanine: step 1/1. Functionally, catalyzes the condensation of pantoate with beta-alanine in an ATP-dependent reaction via a pantoyl-adenylate intermediate. This Exiguobacterium sibiricum (strain DSM 17290 / CCUG 55495 / CIP 109462 / JCM 13490 / 255-15) protein is Pantothenate synthetase.